A 257-amino-acid chain; its full sequence is Membrane protein insertase YidC 1 (257 aa).

An N-terminal signal peptide occupies residues 1–20 (MYRKFGMAAMLVSILLLMTG). Residue Cys-21 is the site of N-palmitoyl cysteine attachment. Residue Cys-21 is the site of S-diacylglycerol cysteine attachment. The next 5 membrane-spanning stretches (helical) occupy residues 35–55 (IWDS…ANAF), 59–79 (FGLA…PLMI), 129–149 (LAGC…YHAI), 160–180 (FLWF…AGIT), and 205–225 (VMIL…WVIG).

The protein belongs to the OXA1/ALB3/YidC family. Type 2 subfamily.

It localises to the cell membrane. In terms of biological role, required for the insertion and/or proper folding and/or complex formation of integral membrane proteins into the membrane. Involved in integration of membrane proteins that insert both dependently and independently of the Sec translocase complex, as well as at least some lipoproteins. The protein is Membrane protein insertase YidC 1 of Halalkalibacterium halodurans (strain ATCC BAA-125 / DSM 18197 / FERM 7344 / JCM 9153 / C-125) (Bacillus halodurans).